Here is a 235-residue protein sequence, read N- to C-terminus: Aspartate/glutamate leucyltransferase (235 aa).

This sequence belongs to the R-transferase family. Bpt subfamily.

It is found in the cytoplasm. It catalyses the reaction N-terminal L-glutamyl-[protein] + L-leucyl-tRNA(Leu) = N-terminal L-leucyl-L-glutamyl-[protein] + tRNA(Leu) + H(+). The enzyme catalyses N-terminal L-aspartyl-[protein] + L-leucyl-tRNA(Leu) = N-terminal L-leucyl-L-aspartyl-[protein] + tRNA(Leu) + H(+). In terms of biological role, functions in the N-end rule pathway of protein degradation where it conjugates Leu from its aminoacyl-tRNA to the N-termini of proteins containing an N-terminal aspartate or glutamate. The sequence is that of Aspartate/glutamate leucyltransferase from Pseudomonas aeruginosa (strain LESB58).